The following is a 289-amino-acid chain: Diaminopimelate epimerase (289 aa).

Residues N13, Q47, and N67 each contribute to the substrate site. C76 (proton donor) is an active-site residue. Substrate contacts are provided by residues 77–78, N167, N200, and 218–219; these read GN and ER. C227 functions as the Proton acceptor in the catalytic mechanism. Residue 228–229 participates in substrate binding; the sequence is GT.

This sequence belongs to the diaminopimelate epimerase family. In terms of assembly, homodimer.

It localises to the cytoplasm. The enzyme catalyses (2S,6S)-2,6-diaminopimelate = meso-2,6-diaminopimelate. Its pathway is amino-acid biosynthesis; L-lysine biosynthesis via DAP pathway; DL-2,6-diaminopimelate from LL-2,6-diaminopimelate: step 1/1. Its function is as follows. Catalyzes the stereoinversion of LL-2,6-diaminopimelate (L,L-DAP) to meso-diaminopimelate (meso-DAP), a precursor of L-lysine and an essential component of the bacterial peptidoglycan. This Burkholderia mallei (strain NCTC 10247) protein is Diaminopimelate epimerase.